Here is a 653-residue protein sequence, read N- to C-terminus: Acetyl-coenzyme A synthetase 1 (653 aa).

Residues arginine 191 to arginine 194, threonine 311, and asparagine 335 contribute to the CoA site. Residues glycine 387–proline 389, aspartate 411–threonine 416, aspartate 500, and arginine 515 contribute to the ATP site. Serine 523 lines the CoA pocket. Arginine 526 lines the ATP pocket. The Mg(2+) site is built by valine 537, histidine 539, and valine 542. Arginine 584 provides a ligand contact to CoA. Position 609 is an N6-acetyllysine (lysine 609).

The protein belongs to the ATP-dependent AMP-binding enzyme family. Requires Mg(2+) as cofactor. In terms of processing, acetylated. Deacetylation by the SIR2-homolog deacetylase activates the enzyme.

The catalysed reaction is acetate + ATP + CoA = acetyl-CoA + AMP + diphosphate. Catalyzes the conversion of acetate into acetyl-CoA (AcCoA), an essential intermediate at the junction of anabolic and catabolic pathways. AcsA undergoes a two-step reaction. In the first half reaction, AcsA combines acetate with ATP to form acetyl-adenylate (AcAMP) intermediate. In the second half reaction, it can then transfer the acetyl group from AcAMP to the sulfhydryl group of CoA, forming the product AcCoA. The chain is Acetyl-coenzyme A synthetase 1 from Pseudomonas putida (strain ATCC 47054 / DSM 6125 / CFBP 8728 / NCIMB 11950 / KT2440).